A 345-amino-acid polypeptide reads, in one-letter code: Mannonate dehydratase 2 (345 aa).

The protein belongs to the mannonate dehydratase family. The cofactor is Fe(2+). Mn(2+) serves as cofactor.

The enzyme catalyses D-mannonate = 2-dehydro-3-deoxy-D-gluconate + H2O. Its pathway is carbohydrate metabolism; pentose and glucuronate interconversion. Catalyzes the dehydration of D-mannonate. This is Mannonate dehydratase 2 (uxuA2) from Halalkalibacterium halodurans (strain ATCC BAA-125 / DSM 18197 / FERM 7344 / JCM 9153 / C-125) (Bacillus halodurans).